A 380-amino-acid polypeptide reads, in one-letter code: Protein trichome birefringence-like 38 (380 aa).

A helical; Signal-anchor for type II membrane protein transmembrane segment spans residues 7–29; the sequence is SLLLLFLPLLTVTILSGVEQAFA. The GDS motif motif lies at 134 to 136; the sequence is GDS. Residues 357–371 carry the DCXHWCLPGXXDXWN motif motif; the sequence is DCSHWCLPGLPDTWN.

Belongs to the PC-esterase family. TBL subfamily.

It is found in the membrane. Functionally, may act as a bridging protein that binds pectin and other cell wall polysaccharides. Probably involved in maintaining esterification of pectins. May be involved in the specific O-acetylation of cell wall polymers. The protein is Protein trichome birefringence-like 38 (TBL38) of Arabidopsis thaliana (Mouse-ear cress).